A 304-amino-acid chain; its full sequence is Undecaprenyl-diphosphatase (304 aa).

7 helical membrane-spanning segments follow: residues 1 to 21, 54 to 74, 90 to 110, 114 to 134, 192 to 212, 225 to 245, and 253 to 273; these read MSLL…FLPV, TTLA…AAGL, LAWF…LFEE, ALGN…LLAA, FLLS…KTVP, LVGT…LLGW, and LFVV…WQGV.

Belongs to the UppP family.

Its subcellular location is the cell inner membrane. It carries out the reaction di-trans,octa-cis-undecaprenyl diphosphate + H2O = di-trans,octa-cis-undecaprenyl phosphate + phosphate + H(+). Functionally, catalyzes the dephosphorylation of undecaprenyl diphosphate (UPP). Confers resistance to bacitracin. The polypeptide is Undecaprenyl-diphosphatase (Anaeromyxobacter sp. (strain Fw109-5)).